Reading from the N-terminus, the 181-residue chain is ATP synthase subunit delta (181 aa).

This sequence belongs to the ATPase delta chain family. In terms of assembly, F-type ATPases have 2 components, F(1) - the catalytic core - and F(0) - the membrane proton channel. F(1) has five subunits: alpha(3), beta(3), gamma(1), delta(1), epsilon(1). F(0) has three main subunits: a(1), b(2) and c(10-14). The alpha and beta chains form an alternating ring which encloses part of the gamma chain. F(1) is attached to F(0) by a central stalk formed by the gamma and epsilon chains, while a peripheral stalk is formed by the delta and b chains.

It localises to the cell inner membrane. F(1)F(0) ATP synthase produces ATP from ADP in the presence of a proton or sodium gradient. F-type ATPases consist of two structural domains, F(1) containing the extramembraneous catalytic core and F(0) containing the membrane proton channel, linked together by a central stalk and a peripheral stalk. During catalysis, ATP synthesis in the catalytic domain of F(1) is coupled via a rotary mechanism of the central stalk subunits to proton translocation. Its function is as follows. This protein is part of the stalk that links CF(0) to CF(1). It either transmits conformational changes from CF(0) to CF(1) or is implicated in proton conduction. The sequence is that of ATP synthase subunit delta from Orientia tsutsugamushi (strain Boryong) (Rickettsia tsutsugamushi).